Consider the following 297-residue polypeptide: Cyclin-dependent kinase 2 (297 aa).

Positions 4–286 constitute a Protein kinase domain; that stretch reads FQKVEKIGEG…AKVALTHPFF (283 aa). Residues 10–18, lysine 33, 81–83, and aspartate 86 each bind ATP; these read IGEGTYGVV and EFL. Residue threonine 14 is modified to Phosphothreonine. The residue at position 15 (tyrosine 15) is a Phosphotyrosine. Aspartate 127 serves as the catalytic Proton acceptor. ATP-binding positions include 129–132 and aspartate 145; that span reads KPQN. At threonine 160 the chain carries Phosphothreonine; by CAK.

It belongs to the protein kinase superfamily. CMGC Ser/Thr protein kinase family. CDC2/CDKX subfamily. Interacts with spdya.

It carries out the reaction L-seryl-[protein] + ATP = O-phospho-L-seryl-[protein] + ADP + H(+). The enzyme catalyses L-threonyl-[protein] + ATP = O-phospho-L-threonyl-[protein] + ADP + H(+). With respect to regulation, phosphorylation at Thr-14 or Tyr-15 inactivates the enzyme, while phosphorylation at Thr-160 activates it. Activated by spdya. In terms of biological role, serine/threonine-protein kinase involved in the control of the cell cycle; essential for meiosis, but dispensable for mitosis. Triggers duplication of centrosomes and DNA. Acts at the G1-S transition to promote the E2F transcriptional program and the initiation of DNA synthesis, and modulates G2 progression; controls the timing of entry into mitosis/meiosis by controlling the subsequent activation of cyclin B/CDK1 by phosphorylation, and coordinates the activation of cyclin B/CDK1 at the centrosome and in the nucleus. Crucial role in orchestrating a fine balance between cellular proliferation, cell death, and DNA repair in embryonic stem cells (ESCs). Activity of CDK2 is maximal during S phase and G2; activated by interaction with cyclin E during the early stages of DNA synthesis to permit G1-S transition, and subsequently activated by cyclin A2 (cyclin A1 in germ cells) during the late stages of DNA replication to drive the transition from S phase to mitosis, the G2 phase. In Xenopus laevis (African clawed frog), this protein is Cyclin-dependent kinase 2 (cdk2).